Consider the following 363-residue polypeptide: Translocating chain-associated membrane protein 1-like 1 (363 aa).

Residues 1–29 (MGLRKKNARNPPVLSHEFMVQNHADMVSC) are Cytoplasmic-facing. The chain crosses the membrane as a helical span at residues 30–50 (VGMFFVLGLMFEGTSEMSIAF). The Lumenal segment spans residues 51 to 80 (LTLQHGVVVPAEGLPSGSRTLYHYGVKDLA). The helical transmembrane segment at 81 to 101 (TVFFYMLVAIIIHATIQEYVL) threads the bilayer. At 102-120 (DKLSRRLQLTKGKQNKLNE) the chain is on the cytoplasmic side. In terms of domain architecture, TLC spans 116 to 324 (NKLNEAGQLS…TVWLQRWLED (209 aa)). The chain crosses the membrane as a helical span at residues 121–141 (AGQLSVFYIVSGIWGMIILAS). Residues 142–159 (ENCLSDPTLLWKSQPHNM) lie on the Lumenal side of the membrane. Residues 160-179 (MTFQMKFFYISQLAYWFHSF) form a helical membrane-spanning segment. Residues 180 to 191 (PELYFQKVRKQD) are Cytoplasmic-facing. A helical transmembrane segment spans residues 192 to 214 (IPGQLIYIGLHLFHIGGAYLLYL). The Lumenal portion of the chain corresponds to 215 to 218 (NHLG). Residues 219–241 (LLLLMLHYAVELLSSVCSLLYFG) form a helical membrane-spanning segment. The Cytoplasmic portion of the chain corresponds to 242–250 (DERYQKGLS). The chain crosses the membrane as a helical span at residues 251 to 271 (LWPIVFISGRLVTLIVSVVTV). At 272–295 (GLHLAGTNRNGNALSGNVNVLAAK) the chain is on the lumenal side. Residues 296–316 (IAVLSSSCSIQVYITWTLTTV) traverse the membrane as a helical segment. The Cytoplasmic segment spans residues 317-363 (WLQRWLEDANLHVCGRKRRSRARKGTENGVENPNRIDSPPKKKEKAP). A disordered region spans residues 338-363 (ARKGTENGVENPNRIDSPPKKKEKAP). Positions 354–363 (SPPKKKEKAP) are enriched in basic and acidic residues.

Belongs to the TRAM family.

It localises to the endoplasmic reticulum membrane. Its function is as follows. Stimulatory or required for the translocation of secretory proteins across the ER membrane. In Mus musculus (Mouse), this protein is Translocating chain-associated membrane protein 1-like 1 (Tram1l1).